We begin with the raw amino-acid sequence, 91 residues long: Small ribosomal subunit protein bS20 (91 aa).

It belongs to the bacterial ribosomal protein bS20 family.

Functionally, binds directly to 16S ribosomal RNA. This Wolinella succinogenes (strain ATCC 29543 / DSM 1740 / CCUG 13145 / JCM 31913 / LMG 7466 / NCTC 11488 / FDC 602W) (Vibrio succinogenes) protein is Small ribosomal subunit protein bS20.